A 110-amino-acid polypeptide reads, in one-letter code: Late cornified envelope protein 2D (110 aa).

It belongs to the LCE family. As to expression, skin-specific. Expression was readily detected in adult trunk skin, adult arm skin, fetal skin, penal skin, vulva, esophagus and tongue. Not expressed in the cervix, rectum, lung, colon, or placenta.

Precursors of the cornified envelope of the stratum corneum. The chain is Late cornified envelope protein 2D (LCE2D) from Homo sapiens (Human).